The following is a 496-amino-acid chain: Aspartyl/glutamyl-tRNA(Asn/Gln) amidotransferase subunit B (496 aa).

The protein belongs to the GatB/GatE family. GatB subfamily. In terms of assembly, heterotrimer of A, B and C subunits.

The catalysed reaction is L-glutamyl-tRNA(Gln) + L-glutamine + ATP + H2O = L-glutaminyl-tRNA(Gln) + L-glutamate + ADP + phosphate + H(+). The enzyme catalyses L-aspartyl-tRNA(Asn) + L-glutamine + ATP + H2O = L-asparaginyl-tRNA(Asn) + L-glutamate + ADP + phosphate + 2 H(+). In terms of biological role, allows the formation of correctly charged Asn-tRNA(Asn) or Gln-tRNA(Gln) through the transamidation of misacylated Asp-tRNA(Asn) or Glu-tRNA(Gln) in organisms which lack either or both of asparaginyl-tRNA or glutaminyl-tRNA synthetases. The reaction takes place in the presence of glutamine and ATP through an activated phospho-Asp-tRNA(Asn) or phospho-Glu-tRNA(Gln). In Nitrosospira multiformis (strain ATCC 25196 / NCIMB 11849 / C 71), this protein is Aspartyl/glutamyl-tRNA(Asn/Gln) amidotransferase subunit B.